The primary structure comprises 460 residues: Indoleacetamide hydrolase (460 aa).

Catalysis depends on charge relay system residues K71 and S146. S169 serves as the catalytic Acyl-ester intermediate.

Belongs to the amidase family.

It functions in the pathway plant hormone metabolism; auxin biosynthesis. In terms of biological role, hydrolyzes indole-3-acetamide (IAM) into indole-3-acetic acid (IAA). The sequence is that of Indoleacetamide hydrolase (iaaH) from Pantoea agglomerans pv. gypsophilae (Erwinia herbicola).